A 482-amino-acid polypeptide reads, in one-letter code: tRNA sulfurtransferase (482 aa).

Positions 61-165 (QQVLEILTTT…DDKLNQILAH (105 aa)) constitute a THUMP domain. Residues 183–184 (LI), K265, G287, and Q296 contribute to the ATP site. An intrachain disulfide couples C344 to C456. The Rhodanese domain maps to 404 to 482 (IEEHAVVLDI…GFNNVKVYRP (79 aa)). C456 acts as the Cysteine persulfide intermediate in catalysis.

It belongs to the ThiI family.

Its subcellular location is the cytoplasm. It catalyses the reaction [ThiI sulfur-carrier protein]-S-sulfanyl-L-cysteine + a uridine in tRNA + 2 reduced [2Fe-2S]-[ferredoxin] + ATP + H(+) = [ThiI sulfur-carrier protein]-L-cysteine + a 4-thiouridine in tRNA + 2 oxidized [2Fe-2S]-[ferredoxin] + AMP + diphosphate. The enzyme catalyses [ThiS sulfur-carrier protein]-C-terminal Gly-Gly-AMP + S-sulfanyl-L-cysteinyl-[cysteine desulfurase] + AH2 = [ThiS sulfur-carrier protein]-C-terminal-Gly-aminoethanethioate + L-cysteinyl-[cysteine desulfurase] + A + AMP + 2 H(+). It participates in cofactor biosynthesis; thiamine diphosphate biosynthesis. Functionally, catalyzes the ATP-dependent transfer of a sulfur to tRNA to produce 4-thiouridine in position 8 of tRNAs, which functions as a near-UV photosensor. Also catalyzes the transfer of sulfur to the sulfur carrier protein ThiS, forming ThiS-thiocarboxylate. This is a step in the synthesis of thiazole, in the thiamine biosynthesis pathway. The sulfur is donated as persulfide by IscS. The protein is tRNA sulfurtransferase of Vibrio vulnificus (strain YJ016).